The chain runs to 185 residues: V-type ATP synthase subunit E (185 aa).

Belongs to the V-ATPase E subunit family.

Produces ATP from ADP in the presence of a proton gradient across the membrane. The polypeptide is V-type ATP synthase subunit E (Deinococcus radiodurans (strain ATCC 13939 / DSM 20539 / JCM 16871 / CCUG 27074 / LMG 4051 / NBRC 15346 / NCIMB 9279 / VKM B-1422 / R1)).